Here is a 1545-residue protein sequence, read N- to C-terminus: ATP-binding cassette sub-family C member 2 (1545 aa).

At 1–27 the chain is on the extracellular side; the sequence is MLEKFCNSTFWNSSFLDSPEADLPLCF. Residues Asn7 and Asn12 are each glycosylated (N-linked (GlcNAc...) asparagine). The helical transmembrane segment at 28–48 threads the bilayer; it reads EQTVLVWIPLGYLWLLAPWQL. Topologically, residues 49-68 are cytoplasmic; sequence LHVYKSRTKRSSTTKLYLAK. Residues 69–89 form a helical membrane-spanning segment; the sequence is QVFVGFLLILAAIELALVLTE. Topologically, residues 90–93 are extracellular; the sequence is DSGQ. Residues 94 to 114 traverse the membrane as a helical segment; the sequence is ATVPAVRYTNPSLYLGTWLLV. Topologically, residues 115-126 are cytoplasmic; the sequence is LLIQYSRQWCVQ. Residues 127-147 form a helical membrane-spanning segment; sequence KNSWFLSLFWILSILCGTFQF. At 148 to 165 the chain is on the extracellular side; the sequence is QTLIRTLLQGDNSNLAYS. The chain crosses the membrane as a helical span at residues 166–186; it reads CLFFISYGFQILILIFSAFSE. The Cytoplasmic portion of the chain corresponds to 187-313; the sequence is NNESSNNPSS…DVPKSWLMKA (127 aa). Residues 253–284 form a disordered region; that stretch reads ARRALQRRQEKSSQQNSGARLPGLNKNQSQSQ. A phosphoserine mark is found at Ser281 and Ser283. The helical transmembrane segment at 314–334 threads the bilayer; the sequence is LFKTFYMVLLKSFLLKLVNDI. In terms of domain architecture, ABC transmembrane type-1 1 spans 322–605; the sequence is LLKSFLLKLV…LPMMISSMLQ (284 aa). At 335–360 the chain is on the extracellular side; sequence FTFVSPQLLKLLISFASDRDTYLWIG. The helical transmembrane segment at 361–381 threads the bilayer; sequence YLCAILLFTAALIQSFCLQCY. At 382–437 the chain is on the cytoplasmic side; the sequence is FQLCFKLGVKVRTAIMASVYKKALTLSNLARKEYTVGETVNLMSVDAQKLMDVTNF. A helical transmembrane segment spans residues 438 to 458; it reads MHMLWSSVLQIVLSIFFLWRE. Topologically, residues 459 to 461 are extracellular; the sequence is LGP. A helical membrane pass occupies residues 462-482; that stretch reads SVLAGVGVMVLVIPINAILST. The Cytoplasmic segment spans residues 483 to 544; it reads KSKTIQVKNM…NLLAFSQLQC (62 aa). The chain crosses the membrane as a helical span at residues 545 to 565; that stretch reads VVIFVFQLTPVLVSVVTFSVY. The Extracellular segment spans residues 566-587; that stretch reads VLVDSNNILDAQKAFTSITLFN. The helical transmembrane segment at 588–608 threads the bilayer; the sequence is ILRFPLSMLPMMISSMLQASV. Residues 609 to 971 lie on the Cytoplasmic side of the membrane; the sequence is STERLEKYLG…VKFSIYLEYL (363 aa). Residues 637 to 861 form the ABC transporter 1 domain; the sequence is MQFSEASFTW…KGEFAKNLKT (225 aa). 671 to 678 contributes to the ATP binding site; sequence GPVGSGKS. Ser878, Ser926, Ser930, and Ser938 each carry phosphoserine. A helical membrane pass occupies residues 972–992; it reads QAIGLFSIFFIILAFVMNSVA. In terms of domain architecture, ABC transmembrane type-1 2 spans 979 to 1264; the sequence is IFFIILAFVM…LVRMTSEIET (286 aa). Over 993-1033 the chain is Extracellular; sequence FIGSNLWLSAWTSDSKIFNSTDYPASQRDMRVGVYGALGLA. Asn1011 is a glycosylation site (N-linked (GlcNAc...) asparagine). The chain crosses the membrane as a helical span at residues 1034–1054; the sequence is QGIFVFIAHFWSAFGFVHASN. Residues 1055 to 1097 lie on the Cytoplasmic side of the membrane; that stretch reads ILHKQLLNNILRAPMRFFDTTPTGRIVNRFAGDISTVDDTLPQ. Residues 1098 to 1118 form a helical membrane-spanning segment; it reads SLRSWITCFLGIISTLVMICM. Position 1119 (Ala1119) is a topological domain, extracellular. Residues 1120-1140 traverse the membrane as a helical segment; the sequence is TPVFTIIVIPLGIIYVSVQMF. The Cytoplasmic segment spans residues 1141-1211; the sequence is YVSTSRQLRR…TSNRWLAIRL (71 aa). The helical transmembrane segment at 1212-1232 threads the bilayer; the sequence is ELVGNLTVFFSALMMVIYRDT. Over 1233 to 1234 the chain is Extracellular; the sequence is LS. The chain crosses the membrane as a helical span at residues 1235–1255; sequence GDTVGFVLSNALNITQTLNWL. Residues 1256–1545 are Cytoplasmic-facing; the sequence is VRMTSEIETN…GIENVNSTKF (290 aa). Residues 1300 to 1534 form the ABC transporter 2 domain; it reads IQFNNYQVRY…PGPFYFMAKE (235 aa). An ATP-binding site is contributed by 1334-1341; sequence GRTGAGKS. Ser1438 carries the post-translational modification Phosphoserine.

The protein belongs to the ABC transporter superfamily. ABCC family. Conjugate transporter (TC 3.A.1.208) subfamily. Expressed by polarized cells in liver, kidney and intestine. The highest expression is found in liver. Expressed in small intestine.

It localises to the apical cell membrane. It carries out the reaction ATP + H2O + xenobioticSide 1 = ADP + phosphate + xenobioticSide 2.. The enzyme catalyses an S-substituted glutathione(in) + ATP + H2O = an S-substituted glutathione(out) + ADP + phosphate + H(+). It catalyses the reaction taurolithocholate 3-sulfate(in) + ATP + H2O = taurolithocholate 3-sulfate(out) + ADP + phosphate + H(+). The catalysed reaction is leukotriene C4(in) + ATP + H2O = leukotriene C4(out) + ADP + phosphate + H(+). It carries out the reaction 17beta-estradiol 17-O-(beta-D-glucuronate)(in) + ATP + H2O = 17beta-estradiol 17-O-(beta-D-glucuronate)(out) + ADP + phosphate + H(+). The enzyme catalyses (4Z,15Z)-bilirubin IXalpha C8-beta-D-glucuronoside(in) + ATP + H2O = (4Z,15Z)-bilirubin IXalpha C8-beta-D-glucuronoside(out) + ADP + phosphate + H(+). It catalyses the reaction (4Z,15Z)-bilirubin IXalpha C8,C12-beta-D-bisglucuronoside(in) + ATP + H2O = (4Z,15Z)-bilirubin IXalpha C8,C12-beta-D-bisglucuronoside(out) + ADP + phosphate + H(+). Its function is as follows. ATP-dependent transporter of the ATP-binding cassette (ABC) family that binds and hydrolyzes ATP to enable active transport of various substrates including many drugs, toxicants and endogenous compound across cell membranes. Transports a wide variety of conjugated organic anions such as sulfate-, glucuronide- and glutathione (GSH)-conjugates of endo- and xenobiotics substrates. Mediates hepatobiliary excretion of mono- and bis-glucuronidated bilirubin molecules and therefore play an important role in bilirubin detoxification. Also mediates hepatobiliary excretion of others glucuronide conjugates such as 17beta-estradiol 17-glucosiduronic acid and leukotriene C4. Transports sulfated bile salt such as taurolithocholate sulfate. Transports various anticancer drugs, such as anthracycline, vinca alkaloid and methotrexate and HIV-drugs such as protease inhibitors. Confers resistance to several anti-cancer drugs including cisplatin, doxorubicin, epirubicin, methotrexate, etoposide and vincristine. This is ATP-binding cassette sub-family C member 2 from Homo sapiens (Human).